A 70-amino-acid chain; its full sequence is Cuticle protein 16 isoform b (70 aa).

This Limulus polyphemus (Atlantic horseshoe crab) protein is Cuticle protein 16 isoform b.